The following is a 105-amino-acid chain: Thioredoxin (105 aa).

A Thioredoxin domain is found at 2-105 (VKQIESKYAF…KLEATINELI (104 aa)). N6-acetyllysine is present on K3. K8 carries the N6-succinyllysine modification. Active-site nucleophile residues include C32 and C35. C32 and C35 are oxidised to a cystine. At K39 the chain carries N6-acetyllysine. S-nitrosocysteine is present on residues C62 and C69. C73 carries the post-translational modification S-nitrosocysteine; alternate. K94 carries the N6-acetyllysine; alternate modification. K94 carries the N6-succinyllysine; alternate modification.

The protein belongs to the thioredoxin family. As to quaternary structure, homodimer; disulfide-linked. Interacts with TXNIP through the redox-active site. Interacts with MAP3K5 and CASP3. Interacts with APEX1; the interaction stimulates the FOS/JUN AP-1 DNA-binding activity in a redox-dependent manner. In terms of processing, in the fully reduced protein, both Cys-69 and Cys-73 are nitrosylated in response to nitric oxide (NO). When two disulfide bonds are present in the protein, only Cys-73 is nitrosylated. Cys-73 can serve as donor for nitrosylation of target proteins.

It localises to the nucleus. Its subcellular location is the cytoplasm. The protein resides in the secreted. Participates in various redox reactions through the reversible oxidation of its active center dithiol to a disulfide and catalyzes dithiol-disulfide exchange reactions. Plays a role in the reversible S-nitrosylation of cysteine residues in target proteins, and thereby contributes to the response to intracellular nitric oxide. Nitrosylates the active site Cys of CASP3 in response to nitric oxide (NO), and thereby inhibits caspase-3 activity. Induces the FOS/JUN AP-1 DNA binding activity in ionizing radiation (IR) cells through its oxidation/reduction status and stimulates AP-1 transcriptional activity. The protein is Thioredoxin (TXN) of Bos taurus (Bovine).